Consider the following 4158-residue polypeptide: Dynein axonemal heavy chain 6 (4158 aa).

A stem region spans residues 1-1433; it reads MTFRATDSEF…VARMALSQYT (1433 aa). An ATP-binding site is contributed by 192–199; it reads IIRENEHL. Positions 805–859 form a coiled coil; sequence CVHLGSDLEELNNEVNEVKLQAQDPQILDISADQDKIRLILNNLQSVLADLQKRA. AAA regions lie at residues 1434–1655, 1715–1948, 2058–2306, and 2408–2659; these read YGYE…VLVM, STIV…KKCS, KYNR…CVQG, and DYNL…LRRR. Residues 1472-1479, 1753-1760, 2096-2103, and 2447-2454 contribute to the ATP site; these read GPAGTGKT, GPTGGGKT, GITGVGKS, and GVGGTGKQ. The tract at residues 2676 to 2961 is stalk; sequence SMLSEKRKQI…KTMALTKARL (286 aa). Positions 2901–2996 form a coiled coil; that stretch reads KRQKLRAAQA…EEISNITGNV (96 aa). AAA stretches follow at residues 3042–3272 and 3509–3730; these read LGDP…AIKT and LTDF…NLKL.

The protein belongs to the dynein heavy chain family. As to quaternary structure, the dynein complex consists of at least two heavy chains and a number of intermediate and light chains. As to expression, expressed in several tissues, including brain, pituitary, testis and trachea, with highest levels in testis.

It localises to the cytoplasm. The protein resides in the cytoskeleton. It is found in the cilium axoneme. Its function is as follows. Force generating protein of respiratory cilia. Produces force towards the minus ends of microtubules. Dynein has ATPase activity; the force-producing power stroke is thought to occur on release of ADP. The sequence is that of Dynein axonemal heavy chain 6 from Homo sapiens (Human).